Reading from the N-terminus, the 601-residue chain is HIRA-interacting protein 3 (601 aa).

Disordered stretches follow at residues 60–469 (KMQA…EDHP) and 546–601 (STGR…GDSS). Positions 66-76 (GTREGKPDFIK) are enriched in basic and acidic residues. A phosphoserine mark is found at Ser-85, Ser-96, and Ser-98. Positions 97–113 (ESESSSSPSSPDGSGPS) are enriched in low complexity. The span at 117–129 (RTTKKTCLRRALK) shows a compositional bias: basic residues. Positions 130 to 149 (KAVESTDEDHQTDLDAKMGL) are enriched in basic and acidic residues. A Phosphoserine modification is found at Ser-134. 2 positions are modified to phosphothreonine: Thr-135 and Thr-141. Phosphoserine is present on residues Ser-152, Ser-153, and Ser-163. Position 167 is a phosphothreonine (Thr-167). The segment covering 186-205 (GAKDKQVPLKADRKQVREES) has biased composition (basic and acidic residues). Phosphoserine is present on residues Ser-205, Ser-207, Ser-208, Ser-231, Ser-234, Ser-238, Ser-313, Ser-359, Ser-360, Ser-384, and Ser-389. Composition is skewed to basic and acidic residues over residues 238-264 (SPAKKKELSEPRSRSNRAERTARERKS) and 313-324 (SSEKGEAEKEEG). Residues 347–378 (RTQTESGRRQNTSSRDDSNSTQEQAAAQGTTK) show a composition bias toward polar residues. Residues 379 to 388 (SGSLGSSNGD) are compositionally biased toward low complexity. Thr-391 carries the phosphothreonine modification. Phosphoserine is present on residues Ser-396 and Ser-398. A compositionally biased stretch (low complexity) spans 413 to 432 (SNKSSKNGQARSCSSSSDSS). Positions 429–572 (SDSSPEPTGQ…TSPGETYRRT (144 aa)) are interaction with the histone H2A-H2B complex. Polar residues predominate over residues 556–566 (WNPSGEGTSPG). A phosphoserine mark is found at Ser-564, Ser-575, Ser-595, Ser-596, and Ser-600. A compositionally biased stretch (basic and acidic residues) spans 568–580 (TYRRTLDSEEEQP).

As to quaternary structure, interacts (via C-terminus) with histone H2A-H2B dimers; the interaction is direct. Interacts with HIRA. Interacts with CK2. Phosphorylated by CK2.

The protein localises to the nucleus. Its function is as follows. Histone chaperone that carries a H2A-H2B histone complex and facilitates its deposition onto chromatin. The polypeptide is HIRA-interacting protein 3 (Mus musculus (Mouse)).